Reading from the N-terminus, the 638-residue chain is Epithelial sodium channel subunit beta (638 aa).

Over Met-1–Ala-50 the chain is Cytoplasmic. The chain crosses the membrane as a helical span at residues Met-51 to Ile-71. The Extracellular segment spans residues Gln-72–Gly-530. Intrachain disulfides connect Cys-98–Cys-270, Cys-182–Cys-187, Cys-194–Cys-201, Cys-247–Cys-254, Cys-359–Cys-446, Cys-384–Cys-442, Cys-388–Cys-438, Cys-397–Cys-424, and Cys-399–Cys-413. Residues Asn-135 and Asn-141 are each glycosylated (N-linked (GlcNAc...) asparagine). Asn-205 carries N-linked (GlcNAc...) asparagine glycosylation. Residues Ser-531–Ile-551 traverse the membrane as a helical segment. Residues Lys-552–Ile-638 lie on the Cytoplasmic side of the membrane. The interval Ser-594–Ser-620 is disordered. The short motif at Pro-614–Tyr-618 is the PY motif; recruits WW domain-containing proteins and is thereby required for ubiquitination and inhibition of the channel by NEDD4 and NEDD4L element. Ser-631 and Ser-633 each carry phosphoserine.

It belongs to the amiloride-sensitive sodium channel (TC 1.A.6) family. SCNN1B subfamily. As to quaternary structure, component of the heterotrimeric epithelial sodium channel (ENaC) composed of an alpha/SCNN1A, a beta/SCNN1B and a gamma/SCNN1G subunit. Interacts with WWP1 (via WW domains). Interacts with WWP2 (via WW domains); inhibits the channel. Interacts with the full-length immature form of PCSK9 (pro-PCSK9). Interacts (N-glycosylated) with BPIFA1; the interaction is direct and inhibits the proteolytic processing of SCNN1A and SCNN1G and the activation of ENaC. Ubiquitinated. Can be ubiquitinated at multiple sites and undergo monoubiquitination and polyubiquitination. Ubiquitination by NEDD4 or NEDD4L inhibits the ENaC channel through endocytosis, intracellular retention and degradation of its individual subunits. However, some studies could not confirm the ubiquitination of this subunit of the ENaC. In terms of processing, N-glycosylated. N-glycosylation is required for interaction with BPIFA1. Post-translationally, phosphorylated on serine and threonine residues. Aldosterone and insulin increase the basal level of phosphorylation. Lung and kidney.

The protein localises to the apical cell membrane. The protein resides in the cytoplasmic vesicle membrane. The catalysed reaction is Na(+)(in) = Na(+)(out). With respect to regulation, originally identified and characterized by its inhibition by the diuretic drug amiloride. This is one of the three pore-forming subunits of the heterotrimeric epithelial sodium channel (ENaC), a critical regulator of sodium balance and fluid homeostasis. ENaC operates in epithelial tissues, where it mediates the electrodiffusion of sodium ions from extracellular fluid through the apical membrane of cells, with water following osmotically. It plays a key role in maintaining sodium homeostasis through electrogenic sodium reabsorption in the kidneys. This subunit is not essential for ENaC function in airway surface liquid homeostasis and proper mucus clearance. The polypeptide is Epithelial sodium channel subunit beta (Mus musculus (Mouse)).